The chain runs to 50 residues: uncharacterized protein (50 aa).

A helical membrane pass occupies residues 10–29; that stretch reads LFFYYPFFIIFLYIYLVFFI.

The protein resides in the plastid. It is found in the chloroplast membrane. This is an uncharacterized protein from Marchantia polymorpha (Common liverwort).